The sequence spans 362 residues: Homeobox protein extradenticle (362 aa).

The PBC domain occupies 34–225; sequence PRKQDIGEIL…VMILRSRFLD (192 aa). Residues 41 to 120 form a PBC-A region; the sequence is EILQQIMNIT…EGVAGPEKGG (80 aa). Residues 123–225 form a PBC-B region; the sequence is DFLSQSDLTG…VMILRSRFLD (103 aa). Positions 226–288 form a DNA-binding region, homeobox; TALE-type; sequence ARRKRRNFSK…NKRIRYKKNI (63 aa). The tract at residues 305–362 is disordered; that stretch reads GASPYSMGGPPSGAATPMMSPAPAQDSMGYSLGSGGYDQQQPYDGSMGYDQLHQDLSP.

It belongs to the TALE/PBX homeobox family.

It is found in the nucleus. Transcription factor which acts with the selector homeodomain proteins altering the regulation of downstream target genes such as wingless (wg), teashirt (tsh) and decapentaplegic (dpp), thus affecting segmental identity. The polypeptide is Homeobox protein extradenticle (Anopheles gambiae (African malaria mosquito)).